The primary structure comprises 255 residues: Aliphatic sulfonates import ATP-binding protein SsuB (255 aa).

Residues 12-233 (LLLNAVSKHY…RLGSVRLAEL (222 aa)) form the ABC transporter domain. 44-51 (GRSGGGKS) is a binding site for ATP.

This sequence belongs to the ABC transporter superfamily. Aliphatic sulfonates importer (TC 3.A.1.17.2) family. As to quaternary structure, the complex is composed of two ATP-binding proteins (SsuB), two transmembrane proteins (SsuC) and a solute-binding protein (SsuA).

The protein localises to the cell inner membrane. The enzyme catalyses ATP + H2O + aliphatic sulfonate-[sulfonate-binding protein]Side 1 = ADP + phosphate + aliphatic sulfonateSide 2 + [sulfonate-binding protein]Side 1.. Part of the ABC transporter complex SsuABC involved in aliphatic sulfonates import. Responsible for energy coupling to the transport system. The protein is Aliphatic sulfonates import ATP-binding protein SsuB of Shigella sonnei (strain Ss046).